Here is a 328-residue protein sequence, read N- to C-terminus: Sin3 histone deacetylase corepressor complex component SDS3 (328 aa).

Over residues 1–22 (MSAAGLLAPAPAPAAAPAAPEY) the composition is skewed to low complexity. Residues 1-69 (MSAAGLLAPA…HDEEDYVEMK (69 aa)) form a disordered region. An N-acetylserine modification is found at Ser2. Residues 2 to 170 (SAAGLLAPAP…IENEKLTMEL (169 aa)) form a mediates interaction with USP17L2 region. Composition is skewed to acidic residues over residues 23–37 (YPED…EDDE) and 45–54 (SDEDTEDASE). Phosphoserine is present on residues Ser32 and Ser45. The residue at position 49 (Thr49) is a Phosphothreonine. The residue at position 53 (Ser53) is a Phosphoserine. Positions 56–69 (DLAKHDEEDYVEMK) are enriched in basic and acidic residues. Residues 66–171 (VEMKEQMYQD…ENEKLTMELT (106 aa)) adopt a coiled-coil conformation. Glycyl lysine isopeptide (Lys-Gly) (interchain with G-Cter in SUMO2) cross-links involve residues Lys69, Lys178, and Lys201. The tract at residues 188 to 226 (RPNDPVPIPDKRRKPAPAQLNYLLTDEQIMEDLRTLNKL) is sin3 interaction domain (SID). The tract at residues 226-252 (LKSPKRPASPSSPEHLPATPAESPAQR) is disordered. Phosphoserine occurs at positions 228, 234, and 237. Thr244 bears the Phosphothreonine mark.

This sequence belongs to the SDS3 family. In terms of assembly, interacts with HCFC1. Homodimer. Component of the SIN3 histone deacetylase (HDAC) corepressor complex. Interacts with SIN3A. Interaction with SIN3B enhances the interaction between SIN3B and HDAC1 to form a complex. Component of a mSin3A corepressor complex that contains SIN3A, SAP130, SUDS3/SAP45, ARID4B/SAP180, HDAC1 and HDAC2. Interacts with USP17L2; the interaction is direct. Interacts with FOXK2. Post-translationally, polyubiquitinated. 'Lys-63'-polyubiquitinated SUDS3 positively regulates histone deacetylation. Regulated through deubiquitination by USP17L2/USP17 that cleaves 'Lys-63'-linked ubiquitin chains. Expressed in all newborn tissues tested, including brain, kidney and liver.

The protein resides in the nucleus. Its function is as follows. Regulatory protein which represses transcription and augments histone deacetylase activity of HDAC1. May have a potential role in tumor suppressor pathways through regulation of apoptosis. May function in the assembly and/or enzymatic activity of the mSin3A corepressor complex or in mediating interactions between the complex and other regulatory complexes. The sequence is that of Sin3 histone deacetylase corepressor complex component SDS3 (Suds3) from Mus musculus (Mouse).